Reading from the N-terminus, the 361-residue chain is Chorismate synthase (361 aa).

Residues R48 and R54 each contribute to the NADP(+) site. FMN contacts are provided by residues R125–S127, N238–A239, G278, K293–S297, and R319.

The protein belongs to the chorismate synthase family. In terms of assembly, homotetramer. It depends on FMNH2 as a cofactor.

It carries out the reaction 5-O-(1-carboxyvinyl)-3-phosphoshikimate = chorismate + phosphate. It functions in the pathway metabolic intermediate biosynthesis; chorismate biosynthesis; chorismate from D-erythrose 4-phosphate and phosphoenolpyruvate: step 7/7. Its function is as follows. Catalyzes the anti-1,4-elimination of the C-3 phosphate and the C-6 proR hydrogen from 5-enolpyruvylshikimate-3-phosphate (EPSP) to yield chorismate, which is the branch point compound that serves as the starting substrate for the three terminal pathways of aromatic amino acid biosynthesis. This reaction introduces a second double bond into the aromatic ring system. The chain is Chorismate synthase from Shigella flexneri.